We begin with the raw amino-acid sequence, 659 residues long: 3-hydroxypropionyl-coenzyme A synthetase (659 aa).

The active site involves aspartate 525. The residue at position 616 (lysine 616) is an N6-acetyllysine.

It belongs to the ATP-dependent AMP-binding enzyme family.

It catalyses the reaction 3-hydroxypropanoate + ATP + CoA = 3-hydroxypropanoyl-CoA + AMP + diphosphate. Its function is as follows. Plays a role in the autotrophic CO(2) fixation pathway. Activates 3-hydroxypropionate to its CoA ester. Can also activate propionate, and to a lesser extent acrylate, acetate and butyrate. This chain is 3-hydroxypropionyl-coenzyme A synthetase, found in Sulfurisphaera tokodaii (strain DSM 16993 / JCM 10545 / NBRC 100140 / 7) (Sulfolobus tokodaii).